Here is a 303-residue protein sequence, read N- to C-terminus: GTPase Era (303 aa).

The Era-type G domain maps to 8–176 (YCGFIAIVGR…ASIVRKHMPE (169 aa)). The tract at residues 16–23 (GRPNVGKS) is G1. 16–23 (GRPNVGKS) contacts GTP. The segment at 42–46 (QTTRH) is G2. Positions 63–66 (DTPG) are G3. Residues 63–67 (DTPGL) and 125–128 (NKVD) contribute to the GTP site. A G4 region spans residues 125–128 (NKVD). The tract at residues 155–157 (ISA) is G5. The 78-residue stretch at 207 to 284 (LGEELPYSVT…HLELWVKVKS (78 aa)) folds into the KH type-2 domain.

Belongs to the TRAFAC class TrmE-Era-EngA-EngB-Septin-like GTPase superfamily. Era GTPase family. Monomer.

The protein resides in the cytoplasm. Its subcellular location is the cell inner membrane. Its function is as follows. An essential GTPase that binds both GDP and GTP, with rapid nucleotide exchange. Plays a role in 16S rRNA processing and 30S ribosomal subunit biogenesis and possibly also in cell cycle regulation and energy metabolism. The chain is GTPase Era from Yersinia pseudotuberculosis serotype O:1b (strain IP 31758).